We begin with the raw amino-acid sequence, 946 residues long: DNA primase (946 aa).

Positions R596 to T626 are disordered. The segment covering F617–T626 has biased composition (polar residues). The segment at C881–C920 adopts a CHC2-type zinc-finger fold.

It belongs to the herpesviridae DNA primase family. As to quaternary structure, associates with the helicase and the primase-associated factor to form the helicase-primase factor.

The protein localises to the host nucleus. Its function is as follows. Essential component of the helicase/primase complex. Unwinds the DNA at the replication forks and generates single-stranded DNA for both leading and lagging strand synthesis. The primase initiates primer synthesis and thereby produces large amount of short RNA primers on the lagging strand that the polymerase elongates using dNTPs. This Human cytomegalovirus (strain Merlin) (HHV-5) protein is DNA primase (UL70).